Here is a 446-residue protein sequence, read N- to C-terminus: Nuclear distribution protein PAC1-1 (446 aa).

A LisH domain is found at 9–41 (QAEELHKSLIAYLSSINASQSVTTLREELQIGD). A coiled-coil region spans residues 60–86 (ISVVRLQKRILDLESKIASLQAELDSA). 8 WD repeats span residues 112 to 153 (SHRG…RTLK), 155 to 195 (HTRT…ANIR), 199 to 239 (GHDH…CVKT), 242 to 281 (TQGDWVRDVFPSFDGKWLVSGGRDQAATIWEVSSGEARAS), 284 to 344 (GHEN…IKTL), 346 to 385 (GHNNWVRGLVFHPGGKYLFSVGDDKTIRCWDLSQEGKLVK), 390 to 430 (AHEH…TGFR), and 432 to 446 (VIATGSADSCVRVFM).

This sequence belongs to the WD repeat LIS1/nudF family. As to quaternary structure, self-associates. Interacts with NDL1 and dynein.

It localises to the cytoplasm. Its subcellular location is the cytoskeleton. The protein localises to the spindle pole. In terms of biological role, positively regulates the activity of the minus-end directed microtubule motor protein dynein. May enhance dynein-mediated microtubule sliding by targeting dynein to the microtubule plus end. Required for nuclear migration during vegetative growth as well as development. Required for retrograde early endosome (EE) transport from the hyphal tip. Required for localization of dynein to the mitotic spindle poles. Recruits additional proteins to the dynein complex at SPBs. The sequence is that of Nuclear distribution protein PAC1-1 from Uncinocarpus reesii (strain UAMH 1704).